The primary structure comprises 640 residues: Zinc finger and BTB domain-containing protein 22 (640 aa).

One can recognise a BTB domain in the interval Cys-57 to Ala-121. 3 disordered regions span residues Arg-191–Pro-244, Pro-308–Asp-327, and Cys-332–Gly-482. Over residues Ser-192–Phe-210 the composition is skewed to polar residues. Residue Ser-203 is modified to Phosphoserine. Positions Pro-318 to Asp-327 are enriched in acidic residues. A compositionally biased stretch (low complexity) spans Ser-431–Ser-442. Residues Gly-469–Gly-482 show a composition bias toward gly residues. The segment at Phe-490–His-511 adopts a C2H2-type 1; atypical zinc-finger fold. 2 C2H2-type zinc fingers span residues Phe-517–His-539 and Tyr-545–His-571. The disordered stretch occupies residues His-571–Asn-640. The segment covering Val-574–Thr-588 has biased composition (gly residues).

The protein belongs to the krueppel C2H2-type zinc-finger protein family.

The protein resides in the nucleus. Its function is as follows. May be involved in transcriptional regulation. The sequence is that of Zinc finger and BTB domain-containing protein 22 (ZBTB22) from Canis lupus familiaris (Dog).